Reading from the N-terminus, the 198-residue chain is Probable GTP-binding protein EngB (198 aa).

An EngB-type G domain is found at S36–E198. Residues G44–S51, G70–L74, D88–G91, N155–D158, and I182–A184 contribute to the GTP site. Mg(2+) is bound by residues S51 and T72.

The protein belongs to the TRAFAC class TrmE-Era-EngA-EngB-Septin-like GTPase superfamily. EngB GTPase family. It depends on Mg(2+) as a cofactor.

In terms of biological role, necessary for normal cell division and for the maintenance of normal septation. This chain is Probable GTP-binding protein EngB, found in Mesomycoplasma hyopneumoniae (strain J / ATCC 25934 / NCTC 10110) (Mycoplasma hyopneumoniae).